The primary structure comprises 297 residues: Phosphatidylinositol N-acetylglucosaminyltransferase subunit C (297 aa).

4 helical membrane passes run 67-87, 88-108, 153-173, and 239-259; these read VFVVIWWYMDEGLLAPQWLFG, TGLASSLVGYVLFDLIDGGDG, AVFMLLGHLIFFDYGANAAIV, and AFGGLLSISAVGAILFALLLF.

Belongs to the PIGC family. Component of the glycosylphosphatidylinositol-N-acetylglucosaminyltransferase (GPI-GnT) complex composed at least by PIGA, PIGC, PIGH, PIGP, PIGQ, PIGY and DPM2. Interacts with PIGQ. Interacts with the heterodimer PIGA:PIGH.

It localises to the endoplasmic reticulum membrane. Its pathway is glycolipid biosynthesis; glycosylphosphatidylinositol-anchor biosynthesis. Functionally, part of the glycosylphosphatidylinositol-N-acetylglucosaminyltransferase (GPI-GnT) complex that catalyzes the transfer of N-acetylglucosamine from UDP-N-acetylglucosamine to phosphatidylinositol and participates in the first step of GPI biosynthesis. The protein is Phosphatidylinositol N-acetylglucosaminyltransferase subunit C of Mus musculus (Mouse).